The chain runs to 126 residues: S-adenosylmethionine decarboxylase proenzyme (126 aa).

The active-site Schiff-base intermediate with substrate; via pyruvic acid is the Ser63. At Ser63 the chain carries Pyruvic acid (Ser); by autocatalysis. The active-site Proton acceptor; for processing activity is the His68. Cys83 functions as the Proton donor; for catalytic activity in the catalytic mechanism.

It belongs to the prokaryotic AdoMetDC family. Type 1 subfamily. In terms of assembly, heterotetramer of two alpha and two beta chains arranged as a dimer of alpha/beta heterodimers. The cofactor is pyruvate. Is synthesized initially as an inactive proenzyme. Formation of the active enzyme involves a self-maturation process in which the active site pyruvoyl group is generated from an internal serine residue via an autocatalytic post-translational modification. Two non-identical subunits are generated from the proenzyme in this reaction, and the pyruvate is formed at the N-terminus of the alpha chain, which is derived from the carboxyl end of the proenzyme. The post-translation cleavage follows an unusual pathway, termed non-hydrolytic serinolysis, in which the side chain hydroxyl group of the serine supplies its oxygen atom to form the C-terminus of the beta chain, while the remainder of the serine residue undergoes an oxidative deamination to produce ammonia and the pyruvoyl group blocking the N-terminus of the alpha chain.

The catalysed reaction is S-adenosyl-L-methionine + H(+) = S-adenosyl 3-(methylsulfanyl)propylamine + CO2. It participates in amine and polyamine biosynthesis; S-adenosylmethioninamine biosynthesis; S-adenosylmethioninamine from S-adenosyl-L-methionine: step 1/1. Catalyzes the decarboxylation of S-adenosylmethionine to S-adenosylmethioninamine (dcAdoMet), the propylamine donor required for the synthesis of the polyamines spermine and spermidine from the diamine putrescine. This Oceanobacillus iheyensis (strain DSM 14371 / CIP 107618 / JCM 11309 / KCTC 3954 / HTE831) protein is S-adenosylmethionine decarboxylase proenzyme.